The primary structure comprises 79 residues: Cytochrome b (79 aa).

Transmembrane regions (helical) follow at residues 1-7 (SALFLAM), 31-52 (WLIR…YLHI), and 67-79 (WNIG…LTMA). Heme b is bound by residues His37 and His51.

Belongs to the cytochrome b family. As to quaternary structure, the cytochrome bc1 complex contains 11 subunits: 3 respiratory subunits (MT-CYB, CYC1 and UQCRFS1), 2 core proteins (UQCRC1 and UQCRC2) and 6 low-molecular weight proteins (UQCRH/QCR6, UQCRB/QCR7, UQCRQ/QCR8, UQCR10/QCR9, UQCR11/QCR10 and a cleavage product of UQCRFS1). This cytochrome bc1 complex then forms a dimer. Requires heme b as cofactor.

The protein resides in the mitochondrion inner membrane. Functionally, component of the ubiquinol-cytochrome c reductase complex (complex III or cytochrome b-c1 complex) that is part of the mitochondrial respiratory chain. The b-c1 complex mediates electron transfer from ubiquinol to cytochrome c. Contributes to the generation of a proton gradient across the mitochondrial membrane that is then used for ATP synthesis. This is Cytochrome b (MT-CYB) from Dipodomys panamintinus (Panamint kangaroo rat).